The following is a 242-amino-acid chain: NAD-dependent protein deacetylase (242 aa).

The 242-residue stretch at 1–242 (MQQFEEVRTI…EFVEGLSSIK (242 aa)) folds into the Deacetylase sirtuin-type domain. Positions 23, 27, 34, 35, 102, 104, 105, and 120 each coordinate NAD(+). Residue Phe34 coordinates nicotinamide. Nicotinamide-binding residues include Ile104 and Asp105. Catalysis depends on His120, which acts as the Proton acceptor. 4 residues coordinate Zn(2+): Cys128, Cys131, Cys148, and Cys151. NAD(+)-binding residues include Thr187, Ser188, Asn213, and Ile231.

This sequence belongs to the sirtuin family. Class U subfamily. The cofactor is Zn(2+).

It localises to the cytoplasm. The catalysed reaction is N(6)-acetyl-L-lysyl-[protein] + NAD(+) + H2O = 2''-O-acetyl-ADP-D-ribose + nicotinamide + L-lysyl-[protein]. Functionally, NAD-dependent protein deacetylase which modulates the activities of several enzymes which are inactive in their acetylated form. The protein is NAD-dependent protein deacetylase of Bacillus anthracis.